The chain runs to 868 residues: Leucine--tRNA ligase (868 aa).

The 'HIGH' region signature appears at 42 to 52; sequence PYPSGKLHMGH. The 'KMSKS' region motif lies at 627-631; that stretch reads KMSKS. ATP is bound at residue K630.

The protein belongs to the class-I aminoacyl-tRNA synthetase family.

Its subcellular location is the cytoplasm. It carries out the reaction tRNA(Leu) + L-leucine + ATP = L-leucyl-tRNA(Leu) + AMP + diphosphate. The chain is Leucine--tRNA ligase from Pseudomonas putida (strain ATCC 47054 / DSM 6125 / CFBP 8728 / NCIMB 11950 / KT2440).